The following is a 153-amino-acid chain: uncharacterized protein (153 aa).

The first 18 residues, 1-18 (MSARISKQLRLSVPPCLA), serve as a signal peptide directing secretion. 2 N-linked (GlcNAc...) asparagine glycosylation sites follow: Asn-19 and Asn-25. Residues 19–43 (NRTTASNSSSCVTEVEPLLQSFSST) are Extracellular-facing. The chain crosses the membrane as a helical span at residues 44 to 64 (LVLIVLATVIFCLVVLSLSTF). Residues 65–153 (HMHKSKMKKR…EHLQQSVVLS (89 aa)) are Cytoplasmic-facing. The tract at residues 75–115 (KIEKAQEEYERDHCSPKAERGHLHGMGRGGTHGSPTSPTIQ) is disordered. A compositionally biased stretch (basic and acidic residues) spans 77–96 (EKAQEEYERDHCSPKAERGH).

The protein resides in the membrane. This is an uncharacterized protein from Xenopus tropicalis (Western clawed frog).